Reading from the N-terminus, the 135-residue chain is Fatty acid-binding protein 5 (135 aa).

Ala-2 is subject to N-acetylalanine. Ser-3 is subject to Phosphoserine. Positions 24-34 match the Nuclear localization signal motif; sequence KELGVGLALRK. N-eicosanoyl ethanolamine is bound by residues Cys-43 and Arg-109. A disulfide bridge links Cys-120 with Cys-127. 129–131 contributes to the (9Z,12Z)-octadecadienoate binding site; the sequence is RVY. Tyr-131 lines the N-eicosanoyl ethanolamine pocket. Tyr-131 provides a ligand contact to hexadecanoate. Tyr-131 bears the Phosphotyrosine mark.

The protein belongs to the calycin superfamily. Fatty-acid binding protein (FABP) family. Monomer.

Its subcellular location is the cytoplasm. It is found in the nucleus. The protein resides in the synapse. The protein localises to the postsynaptic density. It localises to the secreted. It carries out the reaction hexadecanoate(out) = hexadecanoate(in). The enzyme catalyses (9Z,12Z)-octadecadienoate(out) = (9Z,12Z)-octadecadienoate(in). It catalyses the reaction (9Z)-octadecenoate(out) = (9Z)-octadecenoate(in). Intracellular carrier for long-chain fatty acids and related active lipids, such as endocannabinoids, that regulate the metabolism and actions of the ligands they bind. In addition to the cytosolic transport, selectively delivers specific fatty acids from the cytosol to the nucleus, wherein they activate nuclear receptors. Delivers retinoic acid to the nuclear receptor peroxisome proliferator-activated receptor delta; which promotes proliferation and survival. May also serve as a synaptic carrier of endocannabinoid at central synapses and thus controls retrograde endocannabinoid signaling. Modulates inflammation by regulating PTGES induction via NF-kappa-B activation, and prostaglandin E2 (PGE2) biosynthesis during inflammation. The chain is Fatty acid-binding protein 5 from Rattus norvegicus (Rat).